A 779-amino-acid polypeptide reads, in one-letter code: Putative helicase V13 (779 aa).

An SF3 helicase domain is found at 477–642 (DNPKPFITSL…FVKEEELNEK (166 aa)). ATP is bound at residue 504-511 (GKSNAGKS).

This chain is Putative helicase V13, found in Acanthamoeba polyphaga (Amoeba).